Consider the following 236-residue polypeptide: 2,3,4,5-tetrahydropyridine-2,6-dicarboxylate N-acetyltransferase (236 aa).

This sequence belongs to the transferase hexapeptide repeat family. DapH subfamily.

It carries out the reaction (S)-2,3,4,5-tetrahydrodipicolinate + acetyl-CoA + H2O = L-2-acetamido-6-oxoheptanedioate + CoA. Its pathway is amino-acid biosynthesis; L-lysine biosynthesis via DAP pathway; LL-2,6-diaminopimelate from (S)-tetrahydrodipicolinate (acetylase route): step 1/3. Its function is as follows. Catalyzes the transfer of an acetyl group from acetyl-CoA to tetrahydrodipicolinate. In Geobacillus sp. (strain WCH70), this protein is 2,3,4,5-tetrahydropyridine-2,6-dicarboxylate N-acetyltransferase.